Consider the following 371-residue polypeptide: Carbamoyl phosphate synthase small chain (371 aa).

The tract at residues Met-1–Asn-182 is CPSase. L-glutamine contacts are provided by Ser-49, Gly-235, and Gly-237. In terms of domain architecture, Glutamine amidotransferase type-1 spans Arg-186–Lys-371. The active-site Nucleophile is Cys-263. Positions 264, 267, 305, 307, and 308 each coordinate L-glutamine. Active-site residues include His-346 and Glu-348.

This sequence belongs to the CarA family. In terms of assembly, composed of two chains; the small (or glutamine) chain promotes the hydrolysis of glutamine to ammonia, which is used by the large (or ammonia) chain to synthesize carbamoyl phosphate. Tetramer of heterodimers (alpha,beta)4.

The catalysed reaction is hydrogencarbonate + L-glutamine + 2 ATP + H2O = carbamoyl phosphate + L-glutamate + 2 ADP + phosphate + 2 H(+). It carries out the reaction L-glutamine + H2O = L-glutamate + NH4(+). Its pathway is amino-acid biosynthesis; L-arginine biosynthesis; carbamoyl phosphate from bicarbonate: step 1/1. It functions in the pathway pyrimidine metabolism; UMP biosynthesis via de novo pathway; (S)-dihydroorotate from bicarbonate: step 1/3. In terms of biological role, small subunit of the glutamine-dependent carbamoyl phosphate synthetase (CPSase). CPSase catalyzes the formation of carbamoyl phosphate from the ammonia moiety of glutamine, carbonate, and phosphate donated by ATP, constituting the first step of 2 biosynthetic pathways, one leading to arginine and/or urea and the other to pyrimidine nucleotides. The small subunit (glutamine amidotransferase) binds and cleaves glutamine to supply the large subunit with the substrate ammonia. This chain is Carbamoyl phosphate synthase small chain, found in Pyrococcus furiosus (strain ATCC 43587 / DSM 3638 / JCM 8422 / Vc1).